Reading from the N-terminus, the 181-residue chain is ATP synthase subunit delta (181 aa).

The protein belongs to the ATPase delta chain family. As to quaternary structure, F-type ATPases have 2 components, F(1) - the catalytic core - and F(0) - the membrane proton channel. F(1) has five subunits: alpha(3), beta(3), gamma(1), delta(1), epsilon(1). F(0) has three main subunits: a(1), b(2) and c(10-14). The alpha and beta chains form an alternating ring which encloses part of the gamma chain. F(1) is attached to F(0) by a central stalk formed by the gamma and epsilon chains, while a peripheral stalk is formed by the delta and b chains.

The protein localises to the cell inner membrane. F(1)F(0) ATP synthase produces ATP from ADP in the presence of a proton or sodium gradient. F-type ATPases consist of two structural domains, F(1) containing the extramembraneous catalytic core and F(0) containing the membrane proton channel, linked together by a central stalk and a peripheral stalk. During catalysis, ATP synthesis in the catalytic domain of F(1) is coupled via a rotary mechanism of the central stalk subunits to proton translocation. Its function is as follows. This protein is part of the stalk that links CF(0) to CF(1). It either transmits conformational changes from CF(0) to CF(1) or is implicated in proton conduction. This Mannheimia succiniciproducens (strain KCTC 0769BP / MBEL55E) protein is ATP synthase subunit delta.